A 445-amino-acid chain; its full sequence is Histamine H3 receptor (445 aa).

Topologically, residues 1-39 (MERAPPDGPLNASGALAGEAAAAGGARGFSAAWTAVLAA) are extracellular. Residue asparagine 11 is glycosylated (N-linked (GlcNAc...) asparagine). A helical membrane pass occupies residues 40–60 (LMALLIVATVLGNALVMLAFV). The Cytoplasmic portion of the chain corresponds to 61 to 70 (ADSSLRTQNN). A helical membrane pass occupies residues 71 to 91 (FFLLNLAISDFLVGAFCIPLY). Residues 92-108 (VPYVLTGRWTFGRGLCK) are Extracellular-facing. Cysteine 107 and cysteine 188 are joined by a disulfide. A helical transmembrane segment spans residues 109–129 (LWLVVDYLLCTSSAFNIVLIS). Topologically, residues 130–156 (YDRFLSVTRAVSYRAQQGDTRRAVRKM) are cytoplasmic. The helical transmembrane segment at 157–177 (LLVWVLAFLLYGPAILSWEYL) threads the bilayer. The Extracellular portion of the chain corresponds to 178–196 (SGGSSIPEGHCYAEFFYNW). A helical membrane pass occupies residues 197 to 217 (YFLITASTLEFFTPFLSVTFF). Residues 218 to 359 (NLSIYLNIQR…LSRDRKVAKS (142 aa)) lie on the Cytoplasmic side of the membrane. Disordered stretches follow at residues 237-260 (REAA…GCWG) and 288-336 (EATL…LEKR). Residues 242–257 (PEPPPEAQPSPPPPPG) show a composition bias toward pro residues. The segment covering 290-299 (TLGGGGGGGS) has biased composition (gly residues). Residues 300–312 (VASPTSSSGSSSR) are compositionally biased toward low complexity. Residues 360 to 380 (LAVIVSIFGLCWAPYTLLMII) traverse the membrane as a helical segment. Residues 381–395 (RAACHGHCVPDYWYE) are Extracellular-facing. Residues 396-416 (TSFWLLWANSAVNPVLYPLCH) form a helical membrane-spanning segment. Residues 417 to 445 (HSFRRAFTKLLCPQKLKIQPHSSLEHCWK) lie on the Cytoplasmic side of the membrane. Serine 439 carries the phosphoserine modification.

It belongs to the G-protein coupled receptor 1 family. As to expression, expressed predominantly in the CNS, with the greatest expression in the thalamus and caudate nucleus. The various isoforms are mainly coexpressed in brain, but their relative expression level varies in a region-specific manner. Isoform 3 and isoform 7 are highly expressed in the thalamus, caudate nucleus and cerebellum while isoform 5 and isoform 6 show a poor expression. Isoform 5 and isoform 6 show a high expression in the amygdala, substantia nigra, cerebral cortex and hypothalamus. Isoform 7 is not found in hypothalamus or substantia nigra.

The protein resides in the cell membrane. The H3 subclass of histamine receptors could mediate the histamine signals in CNS and peripheral nervous system. Signals through the inhibition of adenylate cyclase and displays high constitutive activity (spontaneous activity in the absence of agonist). Agonist stimulation of isoform 3 neither modified adenylate cyclase activity nor induced intracellular calcium mobilization. This chain is Histamine H3 receptor (HRH3), found in Homo sapiens (Human).